The primary structure comprises 177 residues: Large ribosomal subunit protein uL6 (177 aa).

It belongs to the universal ribosomal protein uL6 family. In terms of assembly, part of the 50S ribosomal subunit.

This protein binds to the 23S rRNA, and is important in its secondary structure. It is located near the subunit interface in the base of the L7/L12 stalk, and near the tRNA binding site of the peptidyltransferase center. This Vibrio parahaemolyticus serotype O3:K6 (strain RIMD 2210633) protein is Large ribosomal subunit protein uL6.